The following is a 417-amino-acid chain: Serine hydroxymethyltransferase (417 aa).

An N6-acetyllysine modification is found at Lys-54. Residues Leu-121 and 125 to 127 (GHL) each bind (6S)-5,6,7,8-tetrahydrofolate. Lys-229 is subject to N6-(pyridoxal phosphate)lysine. Residues Lys-250, Lys-285, and Lys-354 each carry the N6-acetyllysine modification. 355-357 (SPF) lines the (6S)-5,6,7,8-tetrahydrofolate pocket. Lys-375 is modified (N6-acetyllysine).

Belongs to the SHMT family. As to quaternary structure, homodimer. Requires pyridoxal 5'-phosphate as cofactor.

It is found in the cytoplasm. It carries out the reaction (6R)-5,10-methylene-5,6,7,8-tetrahydrofolate + glycine + H2O = (6S)-5,6,7,8-tetrahydrofolate + L-serine. It participates in one-carbon metabolism; tetrahydrofolate interconversion. It functions in the pathway amino-acid biosynthesis; glycine biosynthesis; glycine from L-serine: step 1/1. In terms of biological role, catalyzes the reversible interconversion of serine and glycine with tetrahydrofolate (THF) serving as the one-carbon carrier. This reaction serves as the major source of one-carbon groups required for the biosynthesis of purines, thymidylate, methionine, and other important biomolecules. Also exhibits THF-independent aldolase activity toward beta-hydroxyamino acids, producing glycine and aldehydes, via a retro-aldol mechanism. This chain is Serine hydroxymethyltransferase, found in Escherichia coli O17:K52:H18 (strain UMN026 / ExPEC).